A 562-amino-acid polypeptide reads, in one-letter code: Nicotinate phosphoribosyltransferase (562 aa).

Residues tyrosine 36, phenylalanine 183, and threonine 225 each coordinate nicotinate. At histidine 228 the chain carries Phosphohistidine. Threonine 397 provides a ligand contact to 5-phospho-alpha-D-ribose 1-diphosphate.

It belongs to the NAPRTase family. It depends on Mg(2+) as a cofactor. The cofactor is Mn(2+). Transiently phosphorylated on a His residue during the reaction cycle. Phosphorylation strongly increases the affinity for substrates and increases the rate of nicotinate D-ribonucleotide production. Dephosphorylation regenerates the low-affinity form of the enzyme, leading to product release.

The enzyme catalyses nicotinate + 5-phospho-alpha-D-ribose 1-diphosphate + ATP + H2O = nicotinate beta-D-ribonucleotide + ADP + phosphate + diphosphate. Its pathway is cofactor biosynthesis; NAD(+) biosynthesis; nicotinate D-ribonucleotide from nicotinate: step 1/1. Catalyzes the first step in the biosynthesis of NAD from nicotinic acid, the ATP-dependent synthesis of beta-nicotinate D-ribonucleotide from nicotinate and 5-phospho-D-ribose 1-phosphate. Helps prevent cellular oxidative stress via its role in NAD biosynthesis. This chain is Nicotinate phosphoribosyltransferase, found in Caenorhabditis elegans.